A 225-amino-acid polypeptide reads, in one-letter code: Uracil-DNA glycosylase (225 aa).

Aspartate 65 serves as the catalytic Proton acceptor.

Belongs to the uracil-DNA glycosylase (UDG) superfamily. UNG family.

It localises to the cytoplasm. The enzyme catalyses Hydrolyzes single-stranded DNA or mismatched double-stranded DNA and polynucleotides, releasing free uracil.. In terms of biological role, excises uracil residues from the DNA which can arise as a result of misincorporation of dUMP residues by DNA polymerase or due to deamination of cytosine. The protein is Uracil-DNA glycosylase of Bacillus licheniformis (strain ATCC 14580 / DSM 13 / JCM 2505 / CCUG 7422 / NBRC 12200 / NCIMB 9375 / NCTC 10341 / NRRL NRS-1264 / Gibson 46).